A 141-amino-acid polypeptide reads, in one-letter code: 3-hydroxyacyl-[acyl-carrier-protein] dehydratase FabZ (141 aa).

Residue His-48 is part of the active site.

It belongs to the thioester dehydratase family. FabZ subfamily.

The protein resides in the cytoplasm. It carries out the reaction a (3R)-hydroxyacyl-[ACP] = a (2E)-enoyl-[ACP] + H2O. In terms of biological role, involved in unsaturated fatty acids biosynthesis. Catalyzes the dehydration of short chain beta-hydroxyacyl-ACPs and long chain saturated and unsaturated beta-hydroxyacyl-ACPs. This Bacillus velezensis (strain DSM 23117 / BGSC 10A6 / LMG 26770 / FZB42) (Bacillus amyloliquefaciens subsp. plantarum) protein is 3-hydroxyacyl-[acyl-carrier-protein] dehydratase FabZ.